Reading from the N-terminus, the 497-residue chain is Di-/tripeptide transporter (497 aa).

Over 1 to 36 (MQNLNKTEKTFFGQPRGLLTLFQTEFWERFSYYGMR) the chain is Cytoplasmic. A helical membrane pass occupies residues 37-55 (AILVYYLYALTTADNAGLG). The Extracellular portion of the chain corresponds to 56–64 (LPKAQAMAI). A helical membrane pass occupies residues 65 to 83 (VSIYGALVYLSTIVGGWVA). The Cytoplasmic portion of the chain corresponds to 84-92 (DRLLGASRT). The helical transmembrane segment at 93–111 (IFLGGILITLGHVALATPF) threads the bilayer. Over 112 to 115 (GLSS) the chain is Extracellular. The helical transmembrane segment at 116 to 134 (LFVALFLIILGTGMLKPNI) threads the bilayer. The Cytoplasmic segment spans residues 135–154 (SNMVGHLYSKDDSRRDTGFN). A helical transmembrane segment spans residues 155–173 (IFVVGINMGSLIAPLIVGT). Residues 174–181 (VGQGVNYH) lie on the Extracellular side of the membrane. The chain crosses the membrane as a helical span at residues 182–200 (LGFSLAAIGMIFALFAYWY). Topologically, residues 201–224 (GRLRHFPEIGREPSNPMDAKAKRN) are cytoplasmic. Residues 225–243 (FIITLTIVLIVALIGFFLI) form a helical membrane-spanning segment. Residues 244-254 (YQASPANFINN) are Extracellular-facing. The helical transmembrane segment at 255–273 (FINVLSIIGIVVPIIYFVM) threads the bilayer. Over 274 to 293 (MFTSKKVESDERRKLTAYIP) the chain is Cytoplasmic. The chain crosses the membrane as a helical span at residues 294 to 312 (LFLSAIVFWAIEEQSSTII). Topologically, residues 313–335 (AVWGESRSNLNPTWFGFTFHIDP) are extracellular. A helical membrane pass occupies residues 336–354 (SWYQLLNPLFIVLLSPIFV). At 355 to 372 (RIWNKLGDRQPSTIVKFG) the chain is on the cytoplasmic side. A helical membrane pass occupies residues 373–391 (LGLMLTGASYLIMTLPGLL). Over 392 to 425 (NGTSGRASALWLVLMFAVQMAGELLVSPVGLSVS) the chain is Extracellular. Residues 426–444 (TKLAPVAFQSQMMAMWFLA) form a helical membrane-spanning segment. The Cytoplasmic segment spans residues 445–497 (DSTSQAINAQITPIFKAATEVHFFAITGIIGIIVGIILLIIKKPILKLMGDVR).

This sequence belongs to the major facilitator superfamily. Proton-dependent oligopeptide transporter (POT/PTR) (TC 2.A.17) family.

The protein localises to the cell membrane. In terms of biological role, proton-dependent uptake of di- or tri-peptides. This Lactococcus lactis subsp. cremoris (Streptococcus cremoris) protein is Di-/tripeptide transporter (dtpT).